The primary structure comprises 339 residues: MTPPPAKRQKRNEYRKANTAVADDASEIRLPQKKFYRQRAHANPFSDHQLNYPLSPAHMDWSSHYPAFVDPEPSHTNLAGTRKLLKDVEVVDIGCGFGGLLIGLAPLLPESLIVGMEIRVSVLEYVTARIQALRSQQQKLRSSAIPSESSPAAQQPQQHHQQQLQATETAADAASPSSPDATGETLSLVPGNYQNISAIRSNTMKFFPNFFARHQLSKIFICFPDPHFKARKHKARIISETLNAEYAYALRPGGLLYTITDVEEYHHWVLRHFGEEGADAGQNAGVTELFERVSDEELEKDDCVRVMKEATEEGKKVTRNKGNKYVAVFRRKADPEWPA.

The tract at residues 1–20 is disordered; that stretch reads MTPPPAKRQKRNEYRKANTA. Residues Gly94 and 117–118 each bind S-adenosyl-L-methionine; that span reads EI. The disordered stretch occupies residues 141 to 186; sequence RSSAIPSESSPAAQQPQQHHQQQLQATETAADAASPSSPDATGETL. Low complexity predominate over residues 142–181; the sequence is SSAIPSESSPAAQQPQQHHQQQLQATETAADAASPSSPDA. S-adenosyl-L-methionine contacts are provided by residues 202-203 and Cys222; that span reads NT. The active site involves Asp225. Position 311–313 (311–313) interacts with S-adenosyl-L-methionine; that stretch reads TEE.

It belongs to the class I-like SAM-binding methyltransferase superfamily. TrmB family. As to quaternary structure, forms a complex with trm82.

The protein localises to the nucleus. The catalysed reaction is guanosine(46) in tRNA + S-adenosyl-L-methionine = N(7)-methylguanosine(46) in tRNA + S-adenosyl-L-homocysteine. It functions in the pathway tRNA modification; N(7)-methylguanine-tRNA biosynthesis. Its function is as follows. Catalyzes the formation of N(7)-methylguanine at position 46 (m7G46) in tRNA. The chain is tRNA (guanine-N(7)-)-methyltransferase (trm8) from Aspergillus clavatus (strain ATCC 1007 / CBS 513.65 / DSM 816 / NCTC 3887 / NRRL 1 / QM 1276 / 107).